Consider the following 420-residue polypeptide: Exodeoxyribonuclease 7 large subunit (420 aa).

The protein belongs to the XseA family. In terms of assembly, heterooligomer composed of large and small subunits.

It is found in the cytoplasm. The catalysed reaction is Exonucleolytic cleavage in either 5'- to 3'- or 3'- to 5'-direction to yield nucleoside 5'-phosphates.. Its function is as follows. Bidirectionally degrades single-stranded DNA into large acid-insoluble oligonucleotides, which are then degraded further into small acid-soluble oligonucleotides. The sequence is that of Exodeoxyribonuclease 7 large subunit from Helicobacter acinonychis (strain Sheeba).